The primary structure comprises 235 residues: Ribonuclease PH (235 aa).

Residues R86 and 124-126 (GTR) each bind phosphate.

Belongs to the RNase PH family. Homohexameric ring arranged as a trimer of dimers.

It catalyses the reaction tRNA(n+1) + phosphate = tRNA(n) + a ribonucleoside 5'-diphosphate. Functionally, phosphorolytic 3'-5' exoribonuclease that plays an important role in tRNA 3'-end maturation. Removes nucleotide residues following the 3'-CCA terminus of tRNAs; can also add nucleotides to the ends of RNA molecules by using nucleoside diphosphates as substrates, but this may not be physiologically important. Probably plays a role in initiation of 16S rRNA degradation (leading to ribosome degradation) during starvation. This Francisella tularensis subsp. tularensis (strain FSC 198) protein is Ribonuclease PH.